A 244-amino-acid chain; its full sequence is uncharacterized protein (244 aa).

Over residues 1-11 the composition is skewed to basic residues; it reads MSRRSRSRSRS. 2 disordered regions span residues 1–104 and 213–244; these read MSRR…TLNE and ARQK…KFGK. Residues 12–31 show a composition bias toward basic and acidic residues; it reads PKRDREERKRREDRDRDRER. Residues 32–46 are compositionally biased toward basic residues; that stretch reads KRDRKDRERKRRHRS. The segment covering 63–75 has biased composition (basic and acidic residues); the sequence is FREERRRRERNES. Over residues 77 to 89 the composition is skewed to pro residues; the sequence is KLPPPPPPPPSDP. Basic and acidic residues predominate over residues 213–223; sequence ARQKSDMKKNE. Residues 224–234 show a composition bias toward polar residues; sequence QQAILNKSGNS.

This is an uncharacterized protein from Caenorhabditis elegans.